The sequence spans 76 residues: ATP synthase peripheral stalk subunit F6, mitochondrial (76 aa).

3 positions are modified to N6-acetyllysine: Lys-9, Lys-14, and Lys-47. N6-acetyllysine; alternate is present on residues Lys-52 and Lys-67. Residues Lys-52 and Lys-67 each carry the N6-succinyllysine; alternate modification. At Lys-73 the chain carries N6-acetyllysine. Ser-76 carries the phosphoserine modification.

It belongs to the eukaryotic ATPase subunit F6 family. Component of the ATP synthase complex composed at least of ATP5F1A/subunit alpha, ATP5F1B/subunit beta, ATP5MC1/subunit c (homooctomer), MT-ATP6/subunit a, MT-ATP8/subunit 8, ATP5ME/subunit e, ATP5MF/subunit f, ATP5MG/subunit g, ATP5MK/subunit k, ATP5MJ/subunit j, ATP5F1C/subunit gamma, ATP5F1D/subunit delta, ATP5F1E/subunit epsilon, ATP5PF/subunit F6, ATP5PB/subunit b, ATP5PD/subunit d, ATP5PO/subunit OSCP. ATP synthase complex consists of a soluble F(1) head domain (subunits alpha(3) and beta(3)) - the catalytic core - and a membrane F(0) domain - the membrane proton channel (subunits c, a, 8, e, f, g, k and j). These two domains are linked by a central stalk (subunits gamma, delta, and epsilon) rotating inside the F1 region and a stationary peripheral stalk (subunits F6, b, d, and OSCP).

It is found in the mitochondrion. It localises to the mitochondrion inner membrane. In terms of biological role, subunit F6, of the mitochondrial membrane ATP synthase complex (F(1)F(0) ATP synthase or Complex V) that produces ATP from ADP in the presence of a proton gradient across the membrane which is generated by electron transport complexes of the respiratory chain. ATP synthase complex consist of a soluble F(1) head domain - the catalytic core - and a membrane F(1) domain - the membrane proton channel. These two domains are linked by a central stalk rotating inside the F(1) region and a stationary peripheral stalk. During catalysis, ATP synthesis in the catalytic domain of F(1) is coupled via a rotary mechanism of the central stalk subunits to proton translocation. In vivo, can only synthesize ATP although its ATP hydrolase activity can be activated artificially in vitro. Part of the complex F(0) domain. Part of the complex F(0) domain and the peripheric stalk, which acts as a stator to hold the catalytic alpha(3)beta(3) subcomplex and subunit a/ATP6 static relative to the rotary elements. The sequence is that of ATP synthase peripheral stalk subunit F6, mitochondrial from Sus scrofa (Pig).